A 512-amino-acid polypeptide reads, in one-letter code: Putative B3 domain-containing protein REM4 (512 aa).

The TF-B3 1 DNA-binding region spans 11-103; the sequence is NKAFFIIDLS…VFHVSPFGRS (93 aa). A disordered region spans residues 111–145; that stretch reads SSSTSDDDDDERTVFDDDEDDDVGDDDDNSISEDD. Positions 115–145 are enriched in acidic residues; that stretch reads SDDDDDERTVFDDDEDDDVGDDDDNSISEDD. DNA-binding regions (TF-B3) lie at residues 169–265 and 307–403; these read YLVA…LCPN and ILTF…CSKV. The tract at residues 408–465 is disordered; the sequence is SSDGHKTADRKPRMTDQAPLAEEQTDNRVEKRAQVTEEGGPSRSTRADPGNLQQKQPC. 2 stretches are compositionally biased toward basic and acidic residues: residues 410-421 and 432-442; these read DGHKTADRKPRM and TDNRVEKRAQV.

Its subcellular location is the nucleus. The protein is Putative B3 domain-containing protein REM4 (REM4) of Arabidopsis thaliana (Mouse-ear cress).